A 229-amino-acid chain; its full sequence is Cytochrome c oxidase subunit 2 (229 aa).

Residues 1–26 (MATWSNLGLQDSASPLMEQLNFFHDH) lie on the Mitochondrial intermembrane side of the membrane. A helical membrane pass occupies residues 27–48 (TLLILIMITILVGYLMLMLFFN). At 49–62 (KFTNRFLLHGQTIE) the chain is on the mitochondrial matrix side. Residues 63 to 82 (IIWTILPAIVLMFIALPSLR) form a helical membrane-spanning segment. Topologically, residues 83–229 (ILYLLDEINS…IKWITAMNSN (147 aa)) are mitochondrial intermembrane. Cu cation-binding residues include His161, Cys196, Glu198, Cys200, His204, and Met207. Glu198 serves as a coordination point for Mg(2+).

This sequence belongs to the cytochrome c oxidase subunit 2 family. As to quaternary structure, component of the cytochrome c oxidase (complex IV, CIV), a multisubunit enzyme composed of a catalytic core of 3 subunits and several supernumerary subunits. The complex exists as a monomer or a dimer and forms supercomplexes (SCs) in the inner mitochondrial membrane with ubiquinol-cytochrome c oxidoreductase (cytochrome b-c1 complex, complex III, CIII). Cu cation is required as a cofactor.

The protein resides in the mitochondrion inner membrane. The enzyme catalyses 4 Fe(II)-[cytochrome c] + O2 + 8 H(+)(in) = 4 Fe(III)-[cytochrome c] + 2 H2O + 4 H(+)(out). In terms of biological role, component of the cytochrome c oxidase, the last enzyme in the mitochondrial electron transport chain which drives oxidative phosphorylation. The respiratory chain contains 3 multisubunit complexes succinate dehydrogenase (complex II, CII), ubiquinol-cytochrome c oxidoreductase (cytochrome b-c1 complex, complex III, CIII) and cytochrome c oxidase (complex IV, CIV), that cooperate to transfer electrons derived from NADH and succinate to molecular oxygen, creating an electrochemical gradient over the inner membrane that drives transmembrane transport and the ATP synthase. Cytochrome c oxidase is the component of the respiratory chain that catalyzes the reduction of oxygen to water. Electrons originating from reduced cytochrome c in the intermembrane space (IMS) are transferred via the dinuclear copper A center (CU(A)) of subunit 2 and heme A of subunit 1 to the active site in subunit 1, a binuclear center (BNC) formed by heme A3 and copper B (CU(B)). The BNC reduces molecular oxygen to 2 water molecules using 4 electrons from cytochrome c in the IMS and 4 protons from the mitochondrial matrix. This Simulium vittatum (Striped black fly) protein is Cytochrome c oxidase subunit 2 (COII).